The following is a 368-amino-acid chain: C6 finger domain transcription factor tcpZ (368 aa).

Positions 30–56 (CDACHASKVRCSGEPICARCQRDNVAC) form a DNA-binding region, zn(2)-C6 fungal-type. Residues 84–109 (FIEQRQRPAASQPPGHGTSRDSSVCA) are disordered.

The protein resides in the nucleus. Functionally, transcription factor that specifically regulates the thioclapurine biosynthesis gene cluster. This chain is C6 finger domain transcription factor tcpZ, found in Claviceps purpurea (strain 20.1) (Ergot fungus).